We begin with the raw amino-acid sequence, 279 residues long: Large ribosomal subunit protein uL2 (279 aa).

A disordered region spans residues 224 to 279 (AMNAVDHPMGGGRGHSKGGNIPRSPWNQPSRGLKTRPKKSWDWMIVSDRRKNKAGK).

The protein belongs to the universal ribosomal protein uL2 family. Part of the 50S ribosomal subunit. Forms a bridge to the 30S subunit in the 70S ribosome.

In terms of biological role, one of the primary rRNA binding proteins. Required for association of the 30S and 50S subunits to form the 70S ribosome, for tRNA binding and peptide bond formation. It has been suggested to have peptidyltransferase activity; this is somewhat controversial. Makes several contacts with the 16S rRNA in the 70S ribosome. In Elusimicrobium minutum (strain Pei191), this protein is Large ribosomal subunit protein uL2.